We begin with the raw amino-acid sequence, 185 residues long: Ribosome-recycling factor (185 aa).

Belongs to the RRF family.

The protein localises to the cytoplasm. Responsible for the release of ribosomes from messenger RNA at the termination of protein biosynthesis. May increase the efficiency of translation by recycling ribosomes from one round of translation to another. The protein is Ribosome-recycling factor of Oceanobacillus iheyensis (strain DSM 14371 / CIP 107618 / JCM 11309 / KCTC 3954 / HTE831).